The chain runs to 277 residues: Large ribosomal subunit protein uL2 (277 aa).

The tract at residues G222–K277 is disordered.

It belongs to the universal ribosomal protein uL2 family. Part of the 50S ribosomal subunit. Forms a bridge to the 30S subunit in the 70S ribosome.

One of the primary rRNA binding proteins. Required for association of the 30S and 50S subunits to form the 70S ribosome, for tRNA binding and peptide bond formation. It has been suggested to have peptidyltransferase activity; this is somewhat controversial. Makes several contacts with the 16S rRNA in the 70S ribosome. The protein is Large ribosomal subunit protein uL2 of Rhodopseudomonas palustris (strain BisB18).